A 196-amino-acid polypeptide reads, in one-letter code: Putative NADH dehydrogenase/NAD(P)H nitroreductase XOO4023 (196 aa).

It belongs to the nitroreductase family. HadB/RutE subfamily. FMN serves as cofactor.

In Xanthomonas oryzae pv. oryzae (strain MAFF 311018), this protein is Putative NADH dehydrogenase/NAD(P)H nitroreductase XOO4023.